The chain runs to 475 residues: tRNA-2-methylthio-N(6)-dimethylallyladenosine synthase (475 aa).

The interval Met1–Ala20 is disordered. Residues Lys25–Ala145 enclose the MTTase N-terminal domain. [4Fe-4S] cluster-binding residues include Cys34, Cys70, Cys108, Cys186, Cys190, and Cys193. The 233-residue stretch at Arg172–Ala404 folds into the Radical SAM core domain. Residues Glu407 to Gly469 form the TRAM domain.

It belongs to the methylthiotransferase family. MiaB subfamily. Monomer. [4Fe-4S] cluster serves as cofactor.

The protein localises to the cytoplasm. It catalyses the reaction N(6)-dimethylallyladenosine(37) in tRNA + (sulfur carrier)-SH + AH2 + 2 S-adenosyl-L-methionine = 2-methylsulfanyl-N(6)-dimethylallyladenosine(37) in tRNA + (sulfur carrier)-H + 5'-deoxyadenosine + L-methionine + A + S-adenosyl-L-homocysteine + 2 H(+). Catalyzes the methylthiolation of N6-(dimethylallyl)adenosine (i(6)A), leading to the formation of 2-methylthio-N6-(dimethylallyl)adenosine (ms(2)i(6)A) at position 37 in tRNAs that read codons beginning with uridine. The polypeptide is tRNA-2-methylthio-N(6)-dimethylallyladenosine synthase (Chelativorans sp. (strain BNC1)).